A 111-amino-acid polypeptide reads, in one-letter code: uncharacterized protein (111 aa).

The protein to A.fulgidus AF1864.

This is an uncharacterized protein from Aquifex aeolicus (strain VF5).